A 232-amino-acid chain; its full sequence is MAQSVSLSTIASPILSQKPGSSVKSTPPCMASFPLRRQLPRLGLRNVRAQAGGDGDNKDNSVEVHRVNKDDQGTAVERKPRRSSIDISPFGLLDPWSPMRSMRQMLDTMDRIFEDAITIPGRNIGGGEIRVPWEIKDEEHEIRMRFDMPGVSKEDVKVSVEDDVLVIKSDHREENGGEDCWSRKSYSCYDTRLKLPDNCEKEKVKAELKDGVLYITIPKTKIERTVIDVQIQ.

The segment covering 1 to 25 (MAQSVSLSTIASPILSQKPGSSVKS) has biased composition (polar residues). 2 disordered regions span residues 1-35 (MAQS…SFPL) and 48-81 (RAQA…RKPR). The transit peptide at 1 to 46 (MAQSVSLSTIASPILSQKPGSSVKSTPPCMASFPLRRQLPRLGLRN) directs the protein to the chloroplast. The segment covering 55-78 (GDNKDNSVEVHRVNKDDQGTAVER) has biased composition (basic and acidic residues). The sHSP domain maps to 124 to 232 (IGGGEIRVPW…ERTVIDVQIQ (109 aa)).

It belongs to the small heat shock protein (HSP20) family.

The protein resides in the plastid. Its subcellular location is the chloroplast. The chain is Small heat shock protein, chloroplastic (HSP21) from Pisum sativum (Garden pea).